The sequence spans 805 residues: Leucine--tRNA ligase (805 aa).

Residues 40–51 carry the 'HIGH' region motif; it reads PYPSGQGLHVGH. A 'KMSKS' region motif is present at residues 577–581; it reads KMSKS. Position 580 (K580) interacts with ATP.

It belongs to the class-I aminoacyl-tRNA synthetase family.

It localises to the cytoplasm. The catalysed reaction is tRNA(Leu) + L-leucine + ATP = L-leucyl-tRNA(Leu) + AMP + diphosphate. In Limosilactobacillus fermentum (strain NBRC 3956 / LMG 18251) (Lactobacillus fermentum), this protein is Leucine--tRNA ligase.